We begin with the raw amino-acid sequence, 225 residues long: 2-amino-5-formylamino-6-ribosylaminopyrimidin-4(3H)-one 5'-monophosphate deformylase (225 aa).

Residues Glu-28, His-30, Asp-39, and His-107 each coordinate Fe cation.

The protein belongs to the creatininase superfamily. FAPy deformylase family. In terms of assembly, homodimer. It depends on Fe(2+) as a cofactor. Zn(2+) serves as cofactor.

It catalyses the reaction 2-amino-5-formylamino-6-(5-phospho-D-ribosylamino)pyrimidin-4(3H)-one + H2O = 2,5-diamino-6-(1-D-ribosylamino)pyrimidin-4(3H)-one 5'-phosphate + formate + H(+). It participates in cofactor biosynthesis; coenzyme F420 biosynthesis. It functions in the pathway cofactor biosynthesis; riboflavin biosynthesis. In terms of biological role, catalyzes the hydrolysis of the formamide of 2-amino-5-formylamino-6-ribosylamino-4(3H)-pyrimidinone 5'-monophosphate (FAPy) to form 2,5-diamino-6-ribosylamino-4(3H)-pyrimidinone 5'-phosphate (APy). The sequence is that of 2-amino-5-formylamino-6-ribosylaminopyrimidin-4(3H)-one 5'-monophosphate deformylase from Methanocaldococcus fervens (strain DSM 4213 / JCM 15782 / AG86) (Methanococcus fervens).